The chain runs to 172 residues: Small ribosomal subunit protein uS5 (172 aa).

An S5 DRBM domain is found at 16-79 (LKEKLVHINR…EDGKKNVIKV (64 aa)).

It belongs to the universal ribosomal protein uS5 family. As to quaternary structure, part of the 30S ribosomal subunit. Contacts proteins S4 and S8.

Functionally, with S4 and S12 plays an important role in translational accuracy. Its function is as follows. Located at the back of the 30S subunit body where it stabilizes the conformation of the head with respect to the body. The sequence is that of Small ribosomal subunit protein uS5 from Chlorobium phaeobacteroides (strain DSM 266 / SMG 266 / 2430).